We begin with the raw amino-acid sequence, 181 residues long: RING-H2 finger protein ATL56 (181 aa).

Residues 1-24 form a disordered region; the sequence is MPPTNNYRISGEPPSTTPSHPPPK. A compositionally biased stretch (pro residues) spans 15 to 24; it reads STTPSHPPPK. A helical membrane pass occupies residues 32 to 52; that stretch reads LFLVGVIMFSIFFLFLVLIGI. Residues 110–152 form an RING-type; atypical zinc finger; that stretch reads CVVCFDGFRQGQWCRNLPGCGHVFHRKCVDTWLLKASTCPICR.

It belongs to the RING-type zinc finger family. ATL subfamily.

It localises to the membrane. The enzyme catalyses S-ubiquitinyl-[E2 ubiquitin-conjugating enzyme]-L-cysteine + [acceptor protein]-L-lysine = [E2 ubiquitin-conjugating enzyme]-L-cysteine + N(6)-ubiquitinyl-[acceptor protein]-L-lysine.. It functions in the pathway protein modification; protein ubiquitination. This chain is RING-H2 finger protein ATL56 (ATL56), found in Arabidopsis thaliana (Mouse-ear cress).